The following is a 191-amino-acid chain: UPF0149 protein VS_2635 (191 aa).

Belongs to the UPF0149 family.

The sequence is that of UPF0149 protein VS_2635 from Vibrio atlanticus (strain LGP32) (Vibrio splendidus (strain Mel32)).